An 807-amino-acid chain; its full sequence is MFCRKYVFQTWKQLSRSYSTVNSIGAAKTRNIGIIAHIDAGKTTTTERMIYYSGRTKRIGNVDEGDTVTDYLPSERERGITIQSAAITLPWNQHKINIIDTPGHADFTFEVIRSLRVLDGAVTILDAVAGVEAQTEKVWKQASALNLPKVVYVNKMDRPGAGFSRTVQEVIQKLETRVVLCNLPYFETNKESDLEFKGVIDVIHQKLLKWNETDANGNEISVVNIDETTPDLLQILEKSRESMVETLGEYDERIIDSFLEHDENYLKIPPMLLDQVIRKATIDNYLTPVFCGASFRNIGVQPLMDGITKYLPSPLETSLPQITKNGKDVTKKVDGEKGLVVANDNNLTLALAFKVMTHSTRGPMTFVRVYSGKLNAASNLINTRTGKKLLIRKLLVMHGDSPEEVKSISAGNIGVIPGYETDFQTGDTLVSSAVAKRNFTAKDSAYRLLPIDIPPPLFNAAIEPHTAGDEAYMKQCVETLIREDPSLKVHLDKEMGQVVLSGMGELHLDIVRERLVNDMKAKVNLKDVVVSYKESFVGKREKEAVITNEEIEVAVTLSHIEDARDYVGQEGALVIEEDNNVILLSETASSEHVRATIDERRWKCENNLEELKEAILNGCLTALQMGGPILGFPLHSTLVTVNRWNVPVEVAQEQALNLMNASRQAVQSLKDEKKDFSILEPIMSTKVYVDSNDLGEVSHDLTQRCKAMIVEIQDQSTQNLETAAWAKDEAAKVYVPPDYTIKKNVSKFDDIANKKIIVAETPLREMIGYLSKLRALTRGRATFDMTLIGMRRAVGNRVDSIVEEYKF.

The transit peptide at 1 to 18 directs the protein to the mitochondrion; that stretch reads MFCRKYVFQTWKQLSRSY. One can recognise a tr-type G domain in the interval 27-315; the sequence is AKTRNIGIIA…GITKYLPSPL (289 aa). GTP-binding positions include 36-43, 100-104, and 154-157; these read AHIDAGKT, DTPGH, and NKMD.

It belongs to the TRAFAC class translation factor GTPase superfamily. Classic translation factor GTPase family. EF-G/EF-2 subfamily.

The protein localises to the mitochondrion. In terms of biological role, mitochondrial GTPase that mediates the disassembly of ribosomes from messenger RNA at the termination of mitochondrial protein biosynthesis. Not involved in the GTP-dependent ribosomal translocation step during translation elongation. The protein is Ribosome-releasing factor 2, mitochondrial of Candida albicans (strain SC5314 / ATCC MYA-2876) (Yeast).